A 513-amino-acid chain; its full sequence is Maturase K (513 aa).

The protein belongs to the intron maturase 2 family. MatK subfamily.

It localises to the plastid. The protein resides in the chloroplast. Its function is as follows. Usually encoded in the trnK tRNA gene intron. Probably assists in splicing its own and other chloroplast group II introns. The chain is Maturase K from Cyrilla racemiflora (Swamp titi).